Consider the following 82-residue polypeptide: Sodium channel neurotoxin MeuNaTxalpha-3 (82 aa).

A signal peptide spans 1 to 8 (LVMAGVES). The LCN-type CS-alpha/beta domain occupies 10-80 (RDGHIARNNN…VPIKVPGDCH (71 aa)). Intrachain disulfides connect cysteine 20–cysteine 79, cysteine 24–cysteine 52, cysteine 38–cysteine 62, and cysteine 42–cysteine 64.

As to expression, expressed by the venom gland.

It is found in the secreted. In terms of biological role, alpha toxins bind voltage-independently at site-3 of sodium channels (Nav) and inhibit the inactivation of the activated channels, thereby blocking neuronal transmission. In Mesobuthus eupeus (Lesser Asian scorpion), this protein is Sodium channel neurotoxin MeuNaTxalpha-3.